A 58-amino-acid polypeptide reads, in one-letter code: Ribosome modulation factor (58 aa).

Residues 1–28 form a disordered region; it reads MKRQKRDRFERAHTQGFKAGLHGRSKDN.

Belongs to the ribosome modulation factor family.

Its subcellular location is the cytoplasm. In terms of biological role, during stationary phase, converts 70S ribosomes to an inactive dimeric form (100S ribosomes). The protein is Ribosome modulation factor of Idiomarina loihiensis (strain ATCC BAA-735 / DSM 15497 / L2-TR).